The chain runs to 462 residues: Argininosuccinate lyase (462 aa).

This sequence belongs to the lyase 1 family. Argininosuccinate lyase subfamily.

It is found in the cytoplasm. It carries out the reaction 2-(N(omega)-L-arginino)succinate = fumarate + L-arginine. The protein operates within amino-acid biosynthesis; L-arginine biosynthesis; L-arginine from L-ornithine and carbamoyl phosphate: step 3/3. This is Argininosuccinate lyase from Exiguobacterium sp. (strain ATCC BAA-1283 / AT1b).